A 238-amino-acid polypeptide reads, in one-letter code: Sugar fermentation stimulation protein homolog (238 aa).

This sequence belongs to the SfsA family.

This is Sugar fermentation stimulation protein homolog from Histophilus somni (strain 2336) (Haemophilus somnus).